We begin with the raw amino-acid sequence, 284 residues long: Pantothenate synthetase (284 aa).

30 to 37 (MGNLHDGH) contributes to the ATP binding site. His-37 acts as the Proton donor in catalysis. Gln-61 contributes to the (R)-pantoate binding site. Gln-61 contributes to the beta-alanine binding site. 149–152 (GEKD) contributes to the ATP binding site. Gln-155 lines the (R)-pantoate pocket. ATP is bound by residues Val-178 and 186–189 (LSSR).

This sequence belongs to the pantothenate synthetase family. Homodimer.

Its subcellular location is the cytoplasm. It carries out the reaction (R)-pantoate + beta-alanine + ATP = (R)-pantothenate + AMP + diphosphate + H(+). Its pathway is cofactor biosynthesis; (R)-pantothenate biosynthesis; (R)-pantothenate from (R)-pantoate and beta-alanine: step 1/1. Its function is as follows. Catalyzes the condensation of pantoate with beta-alanine in an ATP-dependent reaction via a pantoyl-adenylate intermediate. This is Pantothenate synthetase from Photorhabdus laumondii subsp. laumondii (strain DSM 15139 / CIP 105565 / TT01) (Photorhabdus luminescens subsp. laumondii).